We begin with the raw amino-acid sequence, 197 residues long: MKYPDFSLENTLSGIIAGVDEVGRGPLAGPVISAAVIFTDRDTVIDGINDSKKLTPKCRQVLYEKITSVAKFGIGMASVEEINSYNILQATKLSMKRALANLNLELDYVLVDGNQPPEVKWQVKSIVNGDSLSISIAAASIVAKVTRDRLMEELHNKHPQYNWYKNKGYGTKEHLSAIGLHGITKHHRKNFAPIRIL.

The RNase H type-2 domain maps to 14-197 (GIIAGVDEVG…RKNFAPIRIL (184 aa)). A divalent metal cation contacts are provided by Asp-20, Glu-21, and Asp-112.

The protein belongs to the RNase HII family. Requires Mn(2+) as cofactor. It depends on Mg(2+) as a cofactor.

The protein localises to the cytoplasm. The catalysed reaction is Endonucleolytic cleavage to 5'-phosphomonoester.. In terms of biological role, endonuclease that specifically degrades the RNA of RNA-DNA hybrids. The protein is Ribonuclease HII of Wolbachia pipientis subsp. Culex pipiens (strain wPip).